Consider the following 368-residue polypeptide: 4-hydroxy-3-methylbut-2-en-1-yl diphosphate synthase (flavodoxin) (368 aa).

4 residues coordinate [4Fe-4S] cluster: cysteine 271, cysteine 274, cysteine 306, and glutamate 313.

This sequence belongs to the IspG family. [4Fe-4S] cluster is required as a cofactor.

It catalyses the reaction (2E)-4-hydroxy-3-methylbut-2-enyl diphosphate + oxidized [flavodoxin] + H2O + 2 H(+) = 2-C-methyl-D-erythritol 2,4-cyclic diphosphate + reduced [flavodoxin]. The protein operates within isoprenoid biosynthesis; isopentenyl diphosphate biosynthesis via DXP pathway; isopentenyl diphosphate from 1-deoxy-D-xylulose 5-phosphate: step 5/6. Converts 2C-methyl-D-erythritol 2,4-cyclodiphosphate (ME-2,4cPP) into 1-hydroxy-2-methyl-2-(E)-butenyl 4-diphosphate. This Haemophilus influenzae (strain 86-028NP) protein is 4-hydroxy-3-methylbut-2-en-1-yl diphosphate synthase (flavodoxin).